We begin with the raw amino-acid sequence, 297 residues long: Transmembrane protein 178A (297 aa).

The N-terminal stretch at 1 to 25 (MEPRALVTALSLGLSLCSLGLLVTA) is a signal peptide. Residues 26 to 179 (IFTDHWYETD…LLHLRRITAG (154 aa)) lie on the Extracellular side of the membrane. The segment covering 41–57 (ESCERSRAGADPPDQKN) has biased composition (basic and acidic residues). Residues 41–86 (ESCERSRAGADPPDQKNRLMPLSHLPLRDSPPLGRRLLPGGPGRSD) are disordered. A compositionally biased stretch (low complexity) spans 68–79 (RDSPPLGRRLLP). N-linked (GlcNAc...) asparagine glycosylation is present at Asn-158. The helical transmembrane segment at 180–200 (FLGMAVAVLLCGCIVATVSFF) threads the bilayer. Over 201 to 208 (WEESLTQH) the chain is Cytoplasmic. The chain crosses the membrane as a helical span at residues 209–229 (VAGLLFLMTGIFCTISLCTYA). The Extracellular segment spans residues 230 to 257 (ASVSYDLNRVPKLIYSLPHDVEHGYSWS). Residues 258–278 (IFCAWCSLGFIVAAGGLCIAY) form a helical membrane-spanning segment. At 279-297 (PFISRTKIAHLKSGRDSTV) the chain is on the cytoplasmic side.

Belongs to the TMEM178 family. As to quaternary structure, interacts with STIM1. Highly expressed in the bone and its expression increases during osteoclastogenesis.

It is found in the endoplasmic reticulum membrane. Acts as a negative regulator of osteoclast differentiation in basal and inflammatory conditions by regulating TNFSF11-induced Ca (2+) fluxes, thereby controlling the induction of NFATC1. This Mus musculus (Mouse) protein is Transmembrane protein 178A (Tmem178a).